Here is a 524-residue protein sequence, read N- to C-terminus: Serine/threonine-protein kinase PAK 2 (524 aa).

The interval 1–81 (MSDNGELEDK…PEISPPSDFE (81 aa)) is disordered. Residue Ser2 is modified to N-acetylserine. Ser2, Ser20, Ser55, and Ser58 each carry phosphoserine. Residue Thr60 is modified to Phosphothreonine. Lys62 is modified (N6-acetyllysine). Ser64 is subject to Phosphoserine. The span at 67-81 (KEKERPEISPPSDFE) shows a compositional bias: basic and acidic residues. Residues 69-112 (KERPEISPPSDFEHTIHVGFDAVTGEFTGMPEQWARLLQTSNIT) form a GTPase-binding region. Residues 69–137 (KERPEISPPS…KFYDSNTVKQ (69 aa)) are autoregulatory region. The region spanning 74-87 (ISPPSDFEHTIHVG) is the CRIB domain. Lys128 bears the N6-acetyllysine mark. Thr134 carries the post-translational modification Phosphothreonine. Residue Tyr139 is modified to Phosphotyrosine. Ser141 is modified (phosphoserine). Residues 142 to 188 (FTPPEKDGFPSGTPALNTKGSETSAVVTEEDDDDEDAAPPVIAPRPD) form a disordered region. Residue Thr143 is modified to Phosphothreonine. At Ser152 the chain carries Phosphoserine. Phosphothreonine is present on residues Thr154, Thr159, and Thr169. A compositionally biased stretch (polar residues) spans 155–167 (PALNTKGSETSAV). Residues 169–178 (TEEDDDDEDA) show a composition bias toward acidic residues. Ser197 bears the Phosphoserine mark. Positions 204–228 (APVGDSNVDSGAKSSDKQKKKAKMT) are disordered. A Nuclear localization signal motif is present at residues 245–251 (PKKKYTR). A Protein kinase domain is found at 249–499 (YTRYEKIGQG…SAKELLQHPF (251 aa)). ATP-binding positions include 255–263 (IGQGASGTV) and Lys278. The active-site Proton acceptor is the Arg367. Phosphothreonine; by autocatalysis is present on Thr402.

The protein belongs to the protein kinase superfamily. STE Ser/Thr protein kinase family. STE20 subfamily. Interacts tightly with GTP-bound but not GDP-bound CDC42/p21 and RAC1. Interacts with SH3MD4. Interacts with SCRIB. Interacts with ARHGEF7 and GIT1. PAK-2p34 interacts with ARHGAP10. Interacts with RAC1. Post-translationally, full-length PAK2 is autophosphorylated when activated by CDC42/p21. Following cleavage, both peptides, PAK-2p27 and PAK-2p34, become highly autophosphorylated. Autophosphorylation of PAK-2p27 can occur in the absence of any effectors and is dependent on phosphorylation of Thr-402, because PAK-2p27 is acting as an exogenous substrate. During apoptosis proteolytically cleaved by caspase-3 or caspase-3-like proteases to yield active PAK-2p34. In terms of processing, ubiquitinated, leading to its proteasomal degradation.

The protein resides in the cytoplasm. Its subcellular location is the nucleus. It localises to the perinuclear region. The protein localises to the membrane. The enzyme catalyses L-seryl-[protein] + ATP = O-phospho-L-seryl-[protein] + ADP + H(+). The catalysed reaction is L-threonyl-[protein] + ATP = O-phospho-L-threonyl-[protein] + ADP + H(+). Activated by binding small G proteins. Binding of GTP-bound CDC42 or RAC1 to the autoregulatory region releases monomers from the autoinhibited dimer, enables phosphorylation of Thr-402 and allows the kinase domain to adopt an active structure. Following caspase cleavage, autophosphorylated PAK-2p34 is constitutively active. Serine/threonine protein kinase that plays a role in a variety of different signaling pathways including cytoskeleton regulation, cell motility, cell cycle progression, apoptosis or proliferation. Acts as a downstream effector of the small GTPases CDC42 and RAC1. Activation by the binding of active CDC42 and RAC1 results in a conformational change and a subsequent autophosphorylation on several serine and/or threonine residues. Full-length PAK2 stimulates cell survival and cell growth. Phosphorylates MAPK4 and MAPK6 and activates the downstream target MAPKAPK5, a regulator of F-actin polymerization and cell migration. Phosphorylates JUN and plays an important role in EGF-induced cell proliferation. Phosphorylates many other substrates including histone H4 to promote assembly of H3.3 and H4 into nucleosomes, BAD, ribosomal protein S6, or MBP. Phosphorylates CASP7, thereby preventing its activity. Additionally, associates with ARHGEF7 and GIT1 to perform kinase-independent functions such as spindle orientation control during mitosis. On the other hand, apoptotic stimuli such as DNA damage lead to caspase-mediated cleavage of PAK2, generating PAK-2p34, an active p34 fragment that translocates to the nucleus and promotes cellular apoptosis involving the JNK signaling pathway. Caspase-activated PAK2 phosphorylates MKNK1 and reduces cellular translation. The protein is Serine/threonine-protein kinase PAK 2 (Pak2) of Mus musculus (Mouse).